The primary structure comprises 614 residues: Baeyer-Villiger monooxygenase peniC (614 aa).

FAD is bound by residues glutamate 99, 107 to 110, aspartate 119, and tyrosine 125; that span reads TWHW. NADP(+) contacts are provided by residues 255-261, 278-279, and 398-399; these read TGASGVQ, RT, and KR.

The protein belongs to the FAD-binding monooxygenase family. FAD serves as cofactor.

It catalyses the reaction gamma-lactone-2-keto[5.5.5.5]fenestrane + NADPH + O2 + H(+) = penifulvin A + NADP(+) + H2O. Its pathway is secondary metabolite biosynthesis; terpenoid biosynthesis. Baeyer-Villiger monooxygenase; part of the gene cluster that mediates the biosynthesis of penifulvin A, a potent insecticidal sesquiterpene that features a [5.5.5.6]dioxafenestrane ring. Within the pathway, peniC is responsible for the final regioselective Baeyer-Villiger oxidation of gamma-lactone-2-keto[5.5.5.5]fenestran between C1 and C2 to form the delta-lactone moiety of penifulvin A. The first step of the pathway is performed by the sesquiterpene cyclase peniA that generates the angular triquinane scaffold silphinene via cyclization of the linear farnesyl pyrophosphate (FPP). The cytochrome P450 monooxygenase peniB and the flavin-dependent monooxygenase peniC then catalyze a series of oxidation reactions to transform silphinene into penifulvin A. The protein is Baeyer-Villiger monooxygenase peniC of Penicillium patulum (Penicillium griseofulvum).